A 310-amino-acid polypeptide reads, in one-letter code: ADP-L-glycero-D-manno-heptose-6-epimerase (310 aa).

NADP(+)-binding positions include 10–11, 31–32, Lys-38, Lys-53, 75–79, and Asn-92; these read LI, DN, and EGACS. The Proton acceptor role is filled by Tyr-140. Lys-144 provides a ligand contact to NADP(+). Substrate is bound at residue Asn-169. NADP(+)-binding residues include Val-170 and Lys-178. The active-site Proton acceptor is Lys-178. Substrate-binding positions include Ser-180, His-187, 201 to 204, Arg-209, and Tyr-272; that span reads FAGS.

Belongs to the NAD(P)-dependent epimerase/dehydratase family. HldD subfamily. In terms of assembly, homopentamer. The cofactor is NADP(+).

It carries out the reaction ADP-D-glycero-beta-D-manno-heptose = ADP-L-glycero-beta-D-manno-heptose. Its pathway is nucleotide-sugar biosynthesis; ADP-L-glycero-beta-D-manno-heptose biosynthesis; ADP-L-glycero-beta-D-manno-heptose from D-glycero-beta-D-manno-heptose 7-phosphate: step 4/4. Its function is as follows. Catalyzes the interconversion between ADP-D-glycero-beta-D-manno-heptose and ADP-L-glycero-beta-D-manno-heptose via an epimerization at carbon 6 of the heptose. The polypeptide is ADP-L-glycero-D-manno-heptose-6-epimerase (Erwinia tasmaniensis (strain DSM 17950 / CFBP 7177 / CIP 109463 / NCPPB 4357 / Et1/99)).